We begin with the raw amino-acid sequence, 389 residues long: tRNA(Met) cytidine acetate ligase (389 aa).

ATP is bound by residues 8–21 (IAEF…HEYL), Gly-97, Asn-153, and Arg-176.

It belongs to the TmcAL family.

The protein resides in the cytoplasm. The catalysed reaction is cytidine(34) in elongator tRNA(Met) + acetate + ATP = N(4)-acetylcytidine(34) in elongator tRNA(Met) + AMP + diphosphate. Functionally, catalyzes the formation of N(4)-acetylcytidine (ac(4)C) at the wobble position of elongator tRNA(Met), using acetate and ATP as substrates. First activates an acetate ion to form acetyladenylate (Ac-AMP) and then transfers the acetyl group to tRNA to form ac(4)C34. In Lactococcus lactis subsp. cremoris (strain SK11), this protein is tRNA(Met) cytidine acetate ligase.